Reading from the N-terminus, the 373-residue chain is sn-glycerol-3-phosphate import ATP-binding protein UgpC (373 aa).

The 232-residue stretch at 4–235 (LTLSNITKSY…PASVFVATFI (232 aa)) folds into the ABC transporter domain. 37-44 (GPSGCGKS) is an ATP binding site.

Belongs to the ABC transporter superfamily. sn-glycerol-3-phosphate importer (TC 3.A.1.1.3) family. The complex is composed of two ATP-binding proteins (UgpC), two transmembrane proteins (UgpA and UgpE) and a solute-binding protein (UgpB).

It is found in the cell inner membrane. The catalysed reaction is sn-glycerol 3-phosphate(out) + ATP + H2O = sn-glycerol 3-phosphate(in) + ADP + phosphate + H(+). Functionally, part of the ABC transporter complex UgpBAEC involved in sn-glycerol-3-phosphate (G3P) import. Responsible for energy coupling to the transport system. The polypeptide is sn-glycerol-3-phosphate import ATP-binding protein UgpC (Psychromonas ingrahamii (strain DSM 17664 / CCUG 51855 / 37)).